The chain runs to 227 residues: UPF0758 protein Rxyl_1530 (227 aa).

Residues 106-227 (VISSPADVDG…YFSMKEHGML (122 aa)) form the MPN domain. Zn(2+)-binding residues include histidine 177, histidine 179, and aspartate 190. Positions 177-190 (HNHPSGRVEPSRED) match the JAMM motif motif.

It belongs to the UPF0758 family.

This Rubrobacter xylanophilus (strain DSM 9941 / JCM 11954 / NBRC 16129 / PRD-1) protein is UPF0758 protein Rxyl_1530.